The sequence spans 547 residues: Apolipoprotein N-acyltransferase (547 aa).

The next 5 helical transmembrane spans lie at 31–51, 71–91, 106–126, 180–200, and 210–230; these read ILSGILVGTSYIPFPPWALIF, FWAGWVTQFILTLIGFHWIAY, LALLLFCAFMHLYIPVAVAAG, LVGFHGLSAVVLLFNAWMGYV, and ALSHLSLLALTFAALVGWGFW. Positions 247–515 constitute a CN hydrolase domain; that stretch reads VQANIGNLEK…KYLKNAPLTF (269 aa). Residue Glu-294 is the Proton acceptor of the active site. The active site involves Lys-364. The Nucleophile role is filled by Cys-418. A helical transmembrane segment spans residues 515-535; that stretch reads FFVQWGHWDWIVILLVLGAVI.

This sequence belongs to the CN hydrolase family. Apolipoprotein N-acyltransferase subfamily.

It is found in the cell inner membrane. It carries out the reaction N-terminal S-1,2-diacyl-sn-glyceryl-L-cysteinyl-[lipoprotein] + a glycerophospholipid = N-acyl-S-1,2-diacyl-sn-glyceryl-L-cysteinyl-[lipoprotein] + a 2-acyl-sn-glycero-3-phospholipid + H(+). The protein operates within protein modification; lipoprotein biosynthesis (N-acyl transfer). Functionally, catalyzes the phospholipid dependent N-acylation of the N-terminal cysteine of apolipoprotein, the last step in lipoprotein maturation. The chain is Apolipoprotein N-acyltransferase from Bdellovibrio bacteriovorus (strain ATCC 15356 / DSM 50701 / NCIMB 9529 / HD100).